Here is a 636-residue protein sequence, read N- to C-terminus: Chitin synthase VI (636 aa).

4 consecutive transmembrane segments (helical) span residues Leu-23–Ile-43, Thr-374–Ala-394, Leu-399–Gly-419, and Ile-427–Tyr-447. Residues Gln-595–Phe-636 are disordered. The segment covering Pro-607–Ser-627 has biased composition (polar residues).

The protein belongs to the chitin synthase family. Class VI subfamily. Moderately expressed during appressorium formation.

It is found in the cell membrane. The catalysed reaction is [(1-&gt;4)-N-acetyl-beta-D-glucosaminyl](n) + UDP-N-acetyl-alpha-D-glucosamine = [(1-&gt;4)-N-acetyl-beta-D-glucosaminyl](n+1) + UDP + H(+). In terms of biological role, polymerizes chitin, a structural polymer of the cell wall and septum, by transferring the sugar moiety of UDP-GlcNAc to the non-reducing end of the growing chitin polymer. Contributes to the production of conidia but is the only chitine synthase that does not contribute to the ability of fungal conidia to germinate. Involved in fungal stress tolerances. This chain is Chitin synthase VI, found in Metarhizium acridum (strain CQMa 102).